An 86-amino-acid chain; its full sequence is Cell division topological specificity factor (86 aa).

This sequence belongs to the MinE family.

In terms of biological role, prevents the cell division inhibition by proteins MinC and MinD at internal division sites while permitting inhibition at polar sites. This ensures cell division at the proper site by restricting the formation of a division septum at the midpoint of the long axis of the cell. The chain is Cell division topological specificity factor from Shewanella piezotolerans (strain WP3 / JCM 13877).